Consider the following 417-residue polypeptide: NADH-quinone oxidoreductase subunit D (417 aa).

The protein belongs to the complex I 49 kDa subunit family. NDH-1 is composed of 14 different subunits. Subunits NuoB, C, D, E, F, and G constitute the peripheral sector of the complex.

It localises to the cell inner membrane. The enzyme catalyses a quinone + NADH + 5 H(+)(in) = a quinol + NAD(+) + 4 H(+)(out). In terms of biological role, NDH-1 shuttles electrons from NADH, via FMN and iron-sulfur (Fe-S) centers, to quinones in the respiratory chain. The immediate electron acceptor for the enzyme in this species is believed to be ubiquinone. Couples the redox reaction to proton translocation (for every two electrons transferred, four hydrogen ions are translocated across the cytoplasmic membrane), and thus conserves the redox energy in a proton gradient. The chain is NADH-quinone oxidoreductase subunit D from Burkholderia vietnamiensis (strain G4 / LMG 22486) (Burkholderia cepacia (strain R1808)).